The following is a 300-amino-acid chain: Cytochrome b (300 aa).

A run of 6 helical transmembrane segments spans residues 28 to 48 (YGFL…LLAL), 72 to 94 (WCFR…LHIL), 107 to 127 (SWIS…YGYV), 168 to 187 (FFVF…FGIL), 223 to 243 (IPNK…LFLL), and 279 to 299 (IGCQ…YIIL). Heme b contacts are provided by His-78 and His-92.

Belongs to the cytochrome b family. As to quaternary structure, the main subunits of complex b-c1 are: cytochrome b, cytochrome c1 and the Rieske protein. Heme b serves as cofactor.

The protein resides in the mitochondrion inner membrane. Component of the ubiquinol-cytochrome c reductase complex (complex III or cytochrome b-c1 complex) that is part of the mitochondrial respiratory chain. The b-c1 complex mediates electron transfer from ubiquinol to cytochrome c. Contributes to the generation of a proton gradient across the mitochondrial membrane that is then used for ATP synthesis. This is Cytochrome b (MT-CYB) from Plasmodium gallinaceum.